A 220-amino-acid polypeptide reads, in one-letter code: Probable septum site-determining protein MinC (220 aa).

Belongs to the MinC family. Interacts with MinD and FtsZ.

Its function is as follows. Cell division inhibitor that blocks the formation of polar Z ring septums. Rapidly oscillates between the poles of the cell to destabilize FtsZ filaments that have formed before they mature into polar Z rings. Prevents FtsZ polymerization. This Photobacterium profundum (strain SS9) protein is Probable septum site-determining protein MinC.